Here is a 934-residue protein sequence, read N- to C-terminus: Pesticidal crystal protein Cry1Aa (934 aa).

The protein belongs to the delta endotoxin family.

Its function is as follows. Promotes colloidosmotic lysis by binding to the midgut epithelial cells of many lepidopteran larvae. This is Pesticidal crystal protein Cry1Aa (cry1Aa) from Bacillus thuringiensis subsp. sotto.